A 327-amino-acid polypeptide reads, in one-letter code: T-cell surface glycoprotein CD1a (327 aa).

An N-terminal signal peptide occupies residues 1-16; that stretch reads MLFLLLPLLAVLPGDG. The Extracellular segment spans residues 17–300; sequence NADGLKEPLS…VLYWEHHSSV (284 aa). 3 N-linked (GlcNAc...) asparagine glycosylation sites follow: Asn-37, Asn-60, and Asn-74. 90–94 is an a D-galactosylceramide binding site; it reads RTIRS. Intrachain disulfides connect Cys-119/Cys-183 and Cys-223/Cys-278. Asn-145 carries an N-linked (GlcNAc...) asparagine glycan. The a D-galactosylceramide site is built by Glu-171 and Thr-175. The 108-residue stretch at 184–291 folds into the Ig-like domain; it reads PRFILGLLDA…HSSLEGQDIV (108 aa). A helical membrane pass occupies residues 301-321; it reads GFIILAVIVPLLLLIGLALWF. Over 322 to 327 the chain is Cytoplasmic; the sequence is RKRCFC.

In terms of assembly, heterodimer with B2M (beta-2-microglobulin). Interacts with CD74. Expressed on cortical thymocytes, epidermal Langerhans cells, dendritic cells, on certain T-cell leukemias, and in various other tissues.

It is found in the cell membrane. The protein localises to the membrane raft. The protein resides in the endosome membrane. Its function is as follows. Antigen-presenting protein that binds self and non-self lipid and glycolipid antigens and presents them to T-cell receptors on natural killer T-cells. This Homo sapiens (Human) protein is T-cell surface glycoprotein CD1a (CD1A).